Consider the following 590-residue polypeptide: Aspartate--tRNA ligase (590 aa).

Residue Glu-174 participates in L-aspartate binding. The aspartate stretch occupies residues 198–201; that stretch reads QLMK. Arg-220 lines the L-aspartate pocket. ATP contacts are provided by residues 220-222 and Gln-229; that span reads RDE. His-443 provides a ligand contact to L-aspartate. Glu-484 is a binding site for ATP. L-aspartate is bound at residue Arg-491. 536-539 is a binding site for ATP; the sequence is GLDR.

Belongs to the class-II aminoacyl-tRNA synthetase family. Type 1 subfamily. As to quaternary structure, homodimer.

The protein resides in the cytoplasm. It catalyses the reaction tRNA(Asp) + L-aspartate + ATP = L-aspartyl-tRNA(Asp) + AMP + diphosphate. In terms of biological role, catalyzes the attachment of L-aspartate to tRNA(Asp) in a two-step reaction: L-aspartate is first activated by ATP to form Asp-AMP and then transferred to the acceptor end of tRNA(Asp). The polypeptide is Aspartate--tRNA ligase (Lactococcus lactis subsp. lactis (strain IL1403) (Streptococcus lactis)).